The chain runs to 155 residues: Small ribosomal subunit protein uS7c (155 aa).

The protein belongs to the universal ribosomal protein uS7 family. In terms of assembly, part of the 30S ribosomal subunit.

It localises to the plastid. Its subcellular location is the chloroplast. One of the primary rRNA binding proteins, it binds directly to 16S rRNA where it nucleates assembly of the head domain of the 30S subunit. The sequence is that of Small ribosomal subunit protein uS7c (rps7) from Canella winterana (Wild cinnamon).